The chain runs to 409 residues: LL-diaminopimelate aminotransferase (409 aa).

Substrate contacts are provided by tyrosine 15 and glycine 42. Pyridoxal 5'-phosphate is bound by residues tyrosine 72, 108 to 109, tyrosine 132, asparagine 186, tyrosine 217, and 245 to 247; these read AK and SFS. Substrate contacts are provided by lysine 109, tyrosine 132, and asparagine 186. Lysine 248 carries the post-translational modification N6-(pyridoxal phosphate)lysine. The pyridoxal 5'-phosphate site is built by arginine 256 and asparagine 291. The substrate site is built by asparagine 291 and arginine 385.

The protein belongs to the class-I pyridoxal-phosphate-dependent aminotransferase family. LL-diaminopimelate aminotransferase subfamily. In terms of assembly, homodimer. The cofactor is pyridoxal 5'-phosphate.

It carries out the reaction (2S,6S)-2,6-diaminopimelate + 2-oxoglutarate = (S)-2,3,4,5-tetrahydrodipicolinate + L-glutamate + H2O + H(+). It functions in the pathway amino-acid biosynthesis; L-lysine biosynthesis via DAP pathway; LL-2,6-diaminopimelate from (S)-tetrahydrodipicolinate (aminotransferase route): step 1/1. Involved in the synthesis of meso-diaminopimelate (m-DAP or DL-DAP), required for both lysine and peptidoglycan biosynthesis. Catalyzes the direct conversion of tetrahydrodipicolinate to LL-diaminopimelate. The polypeptide is LL-diaminopimelate aminotransferase (Desulfosudis oleivorans (strain DSM 6200 / JCM 39069 / Hxd3) (Desulfococcus oleovorans)).